The following is a 578-amino-acid chain: MGHPTSFGQPSCLVWLAAAFLVLGLCLVQQGAGRQRPHQWKSSEAALSVSPAGDIVDKYSRDSTEGENTVSEGEAEGSRGGSWLEQEGVELRSPSQDSQTGTSTASPTGFRRLLRRLRFWRRGSTRGSDDAAEVSRRTRVPLHTRLLQHLRRVARIIRHGVSAAAGRLFGRVRQVEAERPQPVFTEGDPPDLETNSLYYRDKVPGQGIIQEILRQKPGIAHHPESFSVVAADERVSRTLWAEGGVVRVASELGQPGRVLVRGRRIGLFRPGMQFEATDQATGEPMTALVGHTVLEATARDVDSMRNEGLAVGLFQKVKNPYLANRYLRFLAPFDLVTIPGKPLVQKAKSRNEVGWVKNLLFLLPPTHVDMETFVDEIGRFPQEDRPLADAARLYLTVQAVRLVAHLQDEGVVHGKIMPDSFCLKREGGLYLRDFGSLVRAGAKVVVPAEYDEYTPPEGRAAARSRFGSGATTMTYAFDAWTLGSVIFLIWCSRAPDTKSGYEYSVEFFFSRCRRVPENVKLLVYKLINPSVEARLLALQAIETPEYREMEEQLSAASRLYSGDGTLTGGDDDMPPLET.

Residues methionine 1–glycine 33 form the signal peptide. Positions valine 56–serine 82 are disordered. The Protein kinase domain occupies leucine 259–tyrosine 546. The tract at residues leucine 559–threonine 578 is disordered. A compositionally biased stretch (acidic residues) spans glycine 569 to threonine 578.

Phosphorylated on multiple serine and threonine residues in parasitic extracts and infected cells but not in extracellular parasites.

Its subcellular location is the secreted. It is found in the parasitophorous vacuole membrane. In terms of biological role, thought to play a role in parasitophorous vacuole membrane function during the infection of host organisms. The sequence is that of Rhoptry protein 4 from Toxoplasma gondii.